We begin with the raw amino-acid sequence, 302 residues long: 33 kDa chaperonin (302 aa).

2 cysteine pairs are disulfide-bonded: Cys-234–Cys-236 and Cys-267–Cys-270.

It belongs to the HSP33 family. In terms of processing, under oxidizing conditions two disulfide bonds are formed involving the reactive cysteines. Under reducing conditions zinc is bound to the reactive cysteines and the protein is inactive.

Its subcellular location is the cytoplasm. Functionally, redox regulated molecular chaperone. Protects both thermally unfolding and oxidatively damaged proteins from irreversible aggregation. Plays an important role in the bacterial defense system toward oxidative stress. This Neisseria meningitidis serogroup B (strain ATCC BAA-335 / MC58) protein is 33 kDa chaperonin.